A 420-amino-acid chain; its full sequence is Type II methyltransferase M.NmeDI (420 aa).

Residues 1 to 23 are disordered; it reads MMSLKIQPAVPKKSDKPSATNRD. In terms of domain architecture, SAM-dependent MTase C5-type spans 56 to 411; that stretch reads TLIFSFFSGA…MTLKSYLENH (356 aa). Cys148 is a catalytic residue.

It belongs to the class I-like SAM-binding methyltransferase superfamily. C5-methyltransferase family.

It catalyses the reaction a 2'-deoxycytidine in DNA + S-adenosyl-L-methionine = a 5-methyl-2'-deoxycytidine in DNA + S-adenosyl-L-homocysteine + H(+). Functionally, a methylase that recognizes the double-stranded sequence 5'-RCCGGB-3', methylates C-2 on both strands, and protects the DNA from cleavage by the NmeDI endonuclease. The protein is Type II methyltransferase M.NmeDI (nmeDIMP) of Neisseria meningitidis serogroup C.